Consider the following 504-residue polypeptide: MERSQCGSRDRGVSGRPHLAPGLVVAAPPPPSPALPVPSGMQVPPAFLRPPSLFLRAAAAAAAAAAATSGSGGCPPAPGLESGVGAVGCGYPRTPKCARCRNHGVVSALKGHKRFCRWRDCACAKCTLIAERQRVMAAQVALRRQQAQEESEARGLQRLLCSGLSWPPGGRASGGGGRAENPQSTGGPAAGAALGLGALRQASGSATPAFEVFQQDYPEEKQEQKESKCESCQNGQEELISKSHQLYLGSSSRSNGVIGKQSIGSSISEYSNKPDSILSPHPGEQSGGEESPRSLSSSDLESGNESEWVKDLTATKASLPTVSSRPRDPLDILTKIFPNYRRSRLEGILRFCKGDVVQAIEQVLNGKEHKPDNRNLANSEELENTAFQRASSFSLAGIGFGTLGNKSAFSPLQTTSASYGGDSSLYGVNPRVGISPLRLAYSSAGRGLSGFMSPYLTPGLVPTLPFRPALDYAFSGMIRDSSYLSSKDSITCGRLYFRPNQDNP.

Basic and acidic residues predominate over residues 1–13 (MERSQCGSRDRGV). The disordered stretch occupies residues 1–27 (MERSQCGSRDRGVSGRPHLAPGLVVAA). Residues 97-144 (CARCRNHGVVSALKGHKRFCRWRDCACAKCTLIAERQRVMAAQVALRR) constitute a DNA-binding region (DM). Disordered regions lie at residues 170 to 192 (GRAS…AAGA) and 266 to 307 (SISE…NESE). A compositionally biased stretch (low complexity) spans 293-306 (RSLSSSDLESGNES). The 36-residue stretch at 327 to 362 (RDPLDILTKIFPNYRRSRLEGILRFCKGDVVQAIEQ) folds into the DMA domain.

The protein belongs to the DMRT family. Expressed in liver, kidney, pancreas, prostate and weakly detected in testis and ovary.

The protein localises to the nucleus. In Homo sapiens (Human), this protein is Doublesex- and mab-3-related transcription factor A1 (DMRTA1).